A 506-amino-acid chain; its full sequence is Hippocampus abundant transcript-like protein 1 (506 aa).

Residues 1–25 are disordered; sequence MSVEPPPELEEKAASEPEAGAMPEK. Topologically, residues 1 to 49 are extracellular; that stretch reads MSVEPPPELEEKAASEPEAGAMPEKRAGAQAAGSTWLQGFGRPSVYHAA. The helical transmembrane segment at 50–70 threads the bilayer; it reads IVIFLEFFAWGLLTTPMLTVL. Over 71 to 82 the chain is Cytoplasmic; the sequence is HETFSQHTFLMN. The helical transmembrane segment at 83 to 103 threads the bilayer; that stretch reads GLIQGVKGLLSFLSAPLIGAL. The Extracellular portion of the chain corresponds to 104–111; the sequence is SDVWGRKP. The helical transmembrane segment at 112–132 threads the bilayer; sequence FLLGTVFFTCFPIPLMRISPW. Topologically, residues 133–134 are cytoplasmic; that stretch reads WY. The helical transmembrane segment at 135–155 threads the bilayer; it reads FAMISVSGVFSVTFSVIFAYV. Residues 156–168 lie on the Extracellular side of the membrane; sequence ADVTQEHERSTAY. Residues 169–189 form a helical membrane-spanning segment; the sequence is GWVSATFAASLVSSPAIGAYL. Residues 190 to 196 lie on the Cytoplasmic side of the membrane; it reads SASYGDS. Residues 197 to 217 form a helical membrane-spanning segment; that stretch reads LVVLVATVVALLDICFILVAV. Residues 218–255 lie on the Extracellular side of the membrane; it reads PESLPEKMRPVSWGAQISWKQADPFASLKKVGKDSTVL. A helical transmembrane segment spans residues 256-276; that stretch reads LICITVFLSYLPEAGQYSSFF. Topologically, residues 277-281 are cytoplasmic; that stretch reads LYLRQ. A helical transmembrane segment spans residues 282–302; that stretch reads VIGFGSVKIAAFIAMVGILSI. The Extracellular segment spans residues 303–319; that stretch reads VAQTAFLSILMRSLGNK. The helical transmembrane segment at 320-340 threads the bilayer; sequence NTVLLGLGFQMLQLAWYGFGS. Glutamine 341 is a topological domain (cytoplasmic). The chain crosses the membrane as a helical span at residues 342-362; sequence AWMMWAAGTVAAMSSITFPAI. The Extracellular segment spans residues 363-387; sequence SALVSRNAESDQQGVAQGIITGIRG. A helical transmembrane segment spans residues 388 to 408; that stretch reads LCNGLGPALYGFIFYMFHVEL. Residues 409 to 428 lie on the Cytoplasmic side of the membrane; that stretch reads TELGPKLNSNNVPLQGAVIP. The chain crosses the membrane as a helical span at residues 429–449; the sequence is GPPFLFGACIVLMSFLVALFI. Topologically, residues 450-506 are extracellular; the sequence is PEYSKASGVQKHSNSSSGSLTNTPERGSDEDIEPLLQDSSIWELSSFEEPGNQCTEL. A disordered region spans residues 457–481; sequence GVQKHSNSSSGSLTNTPERGSDEDI. The span at 459–474 shows a compositional bias: polar residues; sequence QKHSNSSSGSLTNTPE. Asparagine 463 is a glycosylation site (N-linked (GlcNAc...) asparagine).

This sequence belongs to the major facilitator superfamily.

The protein localises to the membrane. This is Hippocampus abundant transcript-like protein 1 from Homo sapiens (Human).